The chain runs to 293 residues: uncharacterized protein (293 aa).

Over residues methionine 1 to arginine 10 the composition is skewed to basic residues. A disordered region spans residues methionine 1–alanine 28. The segment covering glycine 15–alanine 28 has biased composition (polar residues).

Its subcellular location is the nucleus. This is an uncharacterized protein from Saccharomyces cerevisiae (strain ATCC 204508 / S288c) (Baker's yeast).